The sequence spans 195 residues: SAGA-associated factor 11 homolog (195 aa).

The segment at 1-22 (MSAANMPTTTGAQGSGNQVPRT) is disordered. The segment at 105-126 (CTCPNCDRLVAAARFAPHLEKC) adopts an SGF11-type zinc-finger fold. The segment at 140–195 (RLATKEGATSAHLHSSGNTGGTDDEDDVDWSSDKRRKKSNQNSRNNGSKKNNGKTF) is disordered. Position 171 is a phosphoserine (Ser171). Residues 179-195 (NQNSRNNGSKKNNGKTF) show a composition bias toward low complexity.

The protein belongs to the SGF11 family. As to quaternary structure, component of some SAGA transcription coactivator-HAT complexes, at least composed of Ada2b, not/nonstop, Pcaf/Gcn5, Sgf11 and Spt3. Within the SAGA complex, Sgf11, e(y)2, and not/nonstop form an additional subcomplex of SAGA called the DUB module (deubiquitination module). Interacts directly with not/nonstop. Interacts with the AMEX complex component xmas-2. Interacts with Cbp80; important for promoter recruitment of Sgf11 that is not associated with the DUB module.

The protein localises to the nucleus. It localises to the nucleoplasm. Its subcellular location is the cytoplasm. Its function is as follows. Component of the transcription regulatory histone acetylation (HAT) complex SAGA, a multiprotein complex that activates transcription by remodeling chromatin and mediating histone acetylation and deubiquitination. Within the SAGA complex, participates in a subcomplex that specifically deubiquitinates histone H2B. The SAGA complex is recruited to specific gene promoters by activators, where it is required for transcription. Required for nuclear receptor-mediated transactivation. Binds independently on SAGA to promoters in an RNA-dependent manner. Binds to mRNA and is essential for total mRNA export from the nucleus. Required to counteract heterochromatin silencing. Controls the development of neuronal connectivity in visual system by being required for accurate axon targeting in the optic lobe. Required for expression of ecdysone-induced genes such as br/broad. The chain is SAGA-associated factor 11 homolog from Drosophila sechellia (Fruit fly).